Here is a 472-residue protein sequence, read N- to C-terminus: Glutamate synthase [NADPH] small chain (472 aa).

The 32-residue stretch at 38–69 (GQAKAQADRCLSCGNPYCEWKCPVHNYIPNWL) folds into the 4Fe-4S ferredoxin-type domain. Residues Cys47, Cys50, Cys55, and Cys59 each contribute to the [4Fe-4S] cluster site.

In terms of assembly, aggregate of 4 catalytic active heterodimers, consisting of a large and a small subunit. [4Fe-4S] cluster is required as a cofactor.

The enzyme catalyses 2 L-glutamate + NADP(+) = L-glutamine + 2-oxoglutarate + NADPH + H(+). It functions in the pathway amino-acid biosynthesis; L-glutamate biosynthesis via GLT pathway; L-glutamate from 2-oxoglutarate and L-glutamine (NADP(+) route): step 1/1. It participates in energy metabolism; nitrogen metabolism. Catalyzes the conversion of L-glutamine and 2-oxoglutarate into two molecules of L-glutamate. The sequence is that of Glutamate synthase [NADPH] small chain (gltD) from Escherichia coli (strain K12).